A 144-amino-acid polypeptide reads, in one-letter code: MIALIQRVSEAAVRVDGEVVGEIDTGLLVLLGVEKDDDEAKAKRLMERVTTYRVFEDDEGKMNLNVKQVNGKVLVVSQFTLPADTKKGTRAGFSRGAHPADAERLYDYFSDLCEQELPTERGRFAADMKVSLINDGPVTFWLQV.

The Gly-cisPro motif, important for rejection of L-amino acids motif lies at 136 to 137 (GP).

This sequence belongs to the DTD family. In terms of assembly, homodimer.

It localises to the cytoplasm. The catalysed reaction is glycyl-tRNA(Ala) + H2O = tRNA(Ala) + glycine + H(+). The enzyme catalyses a D-aminoacyl-tRNA + H2O = a tRNA + a D-alpha-amino acid + H(+). Functionally, an aminoacyl-tRNA editing enzyme that deacylates mischarged D-aminoacyl-tRNAs. Also deacylates mischarged glycyl-tRNA(Ala), protecting cells against glycine mischarging by AlaRS. Acts via tRNA-based rather than protein-based catalysis; rejects L-amino acids rather than detecting D-amino acids in the active site. By recycling D-aminoacyl-tRNA to D-amino acids and free tRNA molecules, this enzyme counteracts the toxicity associated with the formation of D-aminoacyl-tRNA entities in vivo and helps enforce protein L-homochirality. The protein is D-aminoacyl-tRNA deacylase of Vibrio parahaemolyticus serotype O3:K6 (strain RIMD 2210633).